Here is a 156-residue protein sequence, read N- to C-terminus: SsrA-binding protein (156 aa).

Positions 135–150 are enriched in basic and acidic residues; that stretch reads KRDTIKDREWQRDRSR. Residues 135–156 are disordered; it reads KRDTIKDREWQRDRSRIMKKNT.

The protein belongs to the SmpB family.

The protein resides in the cytoplasm. Required for rescue of stalled ribosomes mediated by trans-translation. Binds to transfer-messenger RNA (tmRNA), required for stable association of tmRNA with ribosomes. tmRNA and SmpB together mimic tRNA shape, replacing the anticodon stem-loop with SmpB. tmRNA is encoded by the ssrA gene; the 2 termini fold to resemble tRNA(Ala) and it encodes a 'tag peptide', a short internal open reading frame. During trans-translation Ala-aminoacylated tmRNA acts like a tRNA, entering the A-site of stalled ribosomes, displacing the stalled mRNA. The ribosome then switches to translate the ORF on the tmRNA; the nascent peptide is terminated with the 'tag peptide' encoded by the tmRNA and targeted for degradation. The ribosome is freed to recommence translation, which seems to be the essential function of trans-translation. This is SsrA-binding protein from Legionella pneumophila (strain Paris).